A 322-amino-acid chain; its full sequence is MSRLFLAPMEGLADYVLRDVLTDTGGYDGCVSEFVRVTGSLLPARVYERETPEILAGGYTRSGTPMVIQLLGSDPEWLARNAAYAATLSPHGIDLNFGCPAKVVNRHGGGAMLLTNPELLNRIVASVRAAVPAHIAVTAKMRLGVSDASLAIDCATALAEGGAASLVVHARTRDHGYRPPAHWDWIARIAAAVDVPVIANGDVWTVADWERCRAVSGCADVMIGRGAVSDPFLALRIRGLMDGSPSDQEWPLVLRQIATYLKKLHARIASCHEHGRVKLWLSYLKRTWPQAAELHAAIRRMQDSLEIERVLEGLPGAATAPE.

Residues 8-10 (PME) and Gln69 each bind FMN. Catalysis depends on Cys99, which acts as the Proton donor. FMN contacts are provided by residues Lys140, 200-202 (NGD), and 224-225 (GR).

The protein belongs to the Dus family. DusC subfamily. FMN is required as a cofactor.

It catalyses the reaction 5,6-dihydrouridine(16) in tRNA + NADP(+) = uridine(16) in tRNA + NADPH + H(+). The catalysed reaction is 5,6-dihydrouridine(16) in tRNA + NAD(+) = uridine(16) in tRNA + NADH + H(+). Functionally, catalyzes the synthesis of 5,6-dihydrouridine (D), a modified base found in the D-loop of most tRNAs, via the reduction of the C5-C6 double bond in target uridines. Specifically modifies U16 in tRNAs. In Cupriavidus necator (strain ATCC 17699 / DSM 428 / KCTC 22496 / NCIMB 10442 / H16 / Stanier 337) (Ralstonia eutropha), this protein is tRNA-dihydrouridine(16) synthase.